Here is a 439-residue protein sequence, read N- to C-terminus: Dolichyl-diphosphooligosaccharide--protein glycosyltransferase 48 kDa subunit (439 aa).

The signal sequence occupies residues 1-25 (MELGAAARAWSLLWLLLPLLGLVGA). Residues 27-410 (GPRTLVLLDN…YERFIPSAYP (384 aa)) are Lumenal-facing. A helical membrane pass occupies residues 411–430 (YYASAFSMMVGLFIFSVVFL). At 431–439 (HMKEKEKSD) the chain is on the cytoplasmic side.

This sequence belongs to the DDOST 48 kDa subunit family. In terms of assembly, component of the oligosaccharyltransferase (OST) complex. OST exists in two different complex forms which contain common core subunits RPN1, RPN2, OST48, OST4, DAD1 and TMEM258, either STT3A or STT3B as catalytic subunits, and form-specific accessory subunits. STT3A complex assembly occurs through the formation of 3 subcomplexes. Subcomplex 1 contains RPN1 and TMEM258, subcomplex 2 contains the STT3A-specific subunits STT3A, DC2/OSTC, and KCP2 as well as the core subunit OST4, and subcomplex 3 contains RPN2, DAD1, and OST48. The STT3A complex can form stable complexes with the Sec61 complex or with both the Sec61 and TRAP complexes. Interacts with SMIM22.

Its subcellular location is the endoplasmic reticulum membrane. The protein operates within protein modification; protein glycosylation. Functionally, subunit of the oligosaccharyl transferase (OST) complex that catalyzes the initial transfer of a defined glycan (Glc(3)Man(9)GlcNAc(2) in eukaryotes) from the lipid carrier dolichol-pyrophosphate to an asparagine residue within an Asn-X-Ser/Thr consensus motif in nascent polypeptide chains, the first step in protein N-glycosylation. N-glycosylation occurs cotranslationally and the complex associates with the Sec61 complex at the channel-forming translocon complex that mediates protein translocation across the endoplasmic reticulum (ER). All subunits are required for a maximal enzyme activity. Required for the assembly of both SST3A- and SS3B-containing OST complexes. The chain is Dolichyl-diphosphooligosaccharide--protein glycosyltransferase 48 kDa subunit from Sus scrofa (Pig).